Here is a 325-residue protein sequence, read N- to C-terminus: Ribose-phosphate pyrophosphokinase 4 (325 aa).

2 residues coordinate Mg(2+): aspartate 145 and histidine 147. The segment at 228 to 243 (GRHVVIVDDLVQSGGT) is binding of phosphoribosylpyrophosphate.

The protein belongs to the ribose-phosphate pyrophosphokinase family. Mg(2+) serves as cofactor.

The catalysed reaction is D-ribose 5-phosphate + ATP = 5-phospho-alpha-D-ribose 1-diphosphate + AMP + H(+). The sequence is that of Ribose-phosphate pyrophosphokinase 4 from Oryza sativa subsp. japonica (Rice).